Consider the following 189-residue polypeptide: Translation initiation factor IF-3 (189 aa).

It belongs to the IF-3 family. Monomer.

The protein resides in the cytoplasm. In terms of biological role, IF-3 binds to the 30S ribosomal subunit and shifts the equilibrium between 70S ribosomes and their 50S and 30S subunits in favor of the free subunits, thus enhancing the availability of 30S subunits on which protein synthesis initiation begins. The chain is Translation initiation factor IF-3 from Corynebacterium glutamicum (strain ATCC 13032 / DSM 20300 / JCM 1318 / BCRC 11384 / CCUG 27702 / LMG 3730 / NBRC 12168 / NCIMB 10025 / NRRL B-2784 / 534).